A 378-amino-acid polypeptide reads, in one-letter code: TelA-like protein SAB1262 (378 aa).

Belongs to the TelA family.

In Staphylococcus aureus (strain bovine RF122 / ET3-1), this protein is TelA-like protein SAB1262.